Reading from the N-terminus, the 98-residue chain is Phosphoribosyl-ATP pyrophosphatase (98 aa).

It belongs to the PRA-PH family.

It is found in the cytoplasm. It catalyses the reaction 1-(5-phospho-beta-D-ribosyl)-ATP + H2O = 1-(5-phospho-beta-D-ribosyl)-5'-AMP + diphosphate + H(+). The protein operates within amino-acid biosynthesis; L-histidine biosynthesis; L-histidine from 5-phospho-alpha-D-ribose 1-diphosphate: step 2/9. The chain is Phosphoribosyl-ATP pyrophosphatase from Pelotomaculum thermopropionicum (strain DSM 13744 / JCM 10971 / SI).